The primary structure comprises 650 residues: DNA mismatch repair protein MutL (650 aa).

2 disordered regions span residues 358–392 and 408–448; these read EASQ…QPLV and QPRP…QSAA. Over residues 367–384 the composition is skewed to pro residues; it reads TPQPRPALTPGHPDPPPQ. The segment covering 430–444 has biased composition (low complexity); it reads PYAPIAAAPVPASEP.

The protein belongs to the DNA mismatch repair MutL/HexB family.

In terms of biological role, this protein is involved in the repair of mismatches in DNA. It is required for dam-dependent methyl-directed DNA mismatch repair. May act as a 'molecular matchmaker', a protein that promotes the formation of a stable complex between two or more DNA-binding proteins in an ATP-dependent manner without itself being part of a final effector complex. In Geobacter sp. (strain M21), this protein is DNA mismatch repair protein MutL.